Here is a 1122-residue protein sequence, read N- to C-terminus: MSADSPRRHPSGVVGSGIGLGSGSGTGLGSGSTGGSKSGAAVPAIVPPQTVSDRSILDSAIGFINDVTLANQPVQDPKDTITWARFETCADVSDPRFGDDWELEGNAAPPLLLILGYGLGVQVWAIPANGEAVEVLSWRHGVVTALRVLPTPATAAALDENGRADEPVDSFAEKRPLVAFVDGGSAAASGLLAGSSGLGLGGGGGGVTTVGGSVGGVSGIGVSASAQFSAVNFMSLKTGVQVKTIKFKNAVLDIQANRSAVVITFHERIAVFDARTLEDRLTITTCYPSPGINPNPIALGPRWLAYAEHKLLHSKRSGGGCDGEGVPSYTATVLNAAKSLSKGLREFGEQVAAGLTGTTAGSGASSKSSSFDSASGGPDAKQSGVVTIIDVKHPVKDYSPTSGTPLSSTAGSQGGGDPIVAHFVAHSEALVAMEFDSSGMLLLTADRRGHDFHVFRVQPHPVGPSLAAVHHLYVLHRGDTSAKVQHIAFSLDSRWAAVSTLRGTTHVFPITPYGGAMGVRTHTSLHVVNKLSRFHRSAGLGADGRSSSPISHSESTTFVQSLQPYHNPTLPPYPRPSVVQPLAQLRQPFTLGSPPGSAGLGGGVGGGGVMGSGVSAGGHGVGVGVGSNSQRQRQRLSSLSDDSGKPLSVCSIFAKSRSWLLEPPMATREQPHRVQRKAVDSLFVMAGHGALIQYDLDTKLASHVAKEKICDDTPIELEVEARAQWNLGRRKDGSQEIAPPLGLDNWLIKDRHASLLLDSANQFDDPDERTESWLAQVEIITHAGPHRRLWMGPQFVFKNYNTPSGSNLNHVDAEAVEIGVSKTTTTTLPSTAASSALGLGTIIGKDRSSPLNMPLSAATSVGGAGIGSSAVTGRSGAGVPVLIESGSYSSIEQSPKLMDRFRHGHLDSDYGHGDTRLKEDLADAMRESPSTAAARRETTGNYFTTDQLDGLALNNNNNINNNIIPTKDNASPNPNTNTNPNAIPSSNKVQKAEVTDAVDYPIRHSYGDHGELSTVVNIEVFDDQLSMSSISTNSRLSLEGPPSQSSPPLSLTNGLMDTNLMHFSESVTGTGVAQAQVHGRGANRFEVDDDDEEEEEEEEELDEEAEPDDDEREDRPLGRRNL.

Residues 1 to 41 (MSADSPRRHPSGVVGSGIGLGSGSGTGLGSGSTGGSKSGAA) form a disordered region. Residues 14–37 (VGSGIGLGSGSGTGLGSGSTGGSK) show a composition bias toward gly residues. Position 55 is a phosphoserine (serine 55). 4 stretches are compositionally biased toward low complexity: residues 357–377 (GTTA…ASGG), 626–641 (GSNS…SLSD), 966–987 (TKDN…PSSN), and 1036–1051 (LSLE…PLSL). Disordered stretches follow at residues 357–382 (GTTA…DAKQ), 620–644 (GVGV…DDSG), 966–990 (TKDN…NKVQ), 1033–1054 (NSRL…LTNG), and 1071–1122 (GVAQ…RRNL). Phosphoserine is present on serine 638. A compositionally biased stretch (acidic residues) spans 1087–1112 (VDDDDEEEEEEEEELDEEAEPDDDER). Over residues 1113-1122 (EDRPLGRRNL) the composition is skewed to basic and acidic residues.

This sequence belongs to the BCAS3 family. Expressed in all postembryonic pericardial cells, but not in cardioblasts. Also expressed in Garland cells in third instar larvae (at protein level).

It is found in the cytoplasm. Regulates macropinocytosis in pericardial cells. The chain is Breast carcinoma-amplified sequence 3 homolog (rudhira) from Drosophila melanogaster (Fruit fly).